Here is a 342-residue protein sequence, read N- to C-terminus: Spermidine synthase (342 aa).

Residues 9 to 42 (MKGTELPVKRPREEEAETEMEAANNSNNGCEKEE) are disordered. A PABS domain is found at 52–289 (PGWFSEISPL…GMIGFMLCST (238 aa)). Residue Q83 participates in S-adenosyl 3-(methylsulfanyl)propylamine binding. Y113 serves as a coordination point for putrescine. Residues Q114, D138, E158, 189–190 (DG), and D208 contribute to the S-adenosyl 3-(methylsulfanyl)propylamine site. D208 functions as the Proton acceptor in the catalytic mechanism. Putrescine is bound by residues 208-211 (DSSD) and Y277.

This sequence belongs to the spermidine/spermine synthase family.

The enzyme catalyses S-adenosyl 3-(methylsulfanyl)propylamine + putrescine = S-methyl-5'-thioadenosine + spermidine + H(+). The protein operates within amine and polyamine biosynthesis; spermidine biosynthesis; spermidine from putrescine: step 1/1. In Solanum lycopersicum (Tomato), this protein is Spermidine synthase (SPDSYN).